We begin with the raw amino-acid sequence, 311 residues long: D-alanine--D-alanine ligase (311 aa).

The 196-residue stretch at 106-301 (KLLWRGAELP…FDELCWRILL (196 aa)) folds into the ATP-grasp domain. 132 to 187 (IGSVGLPLMIKPAHEGSSIGMAKVERPEELEAARAEAARYDDLVLAERWIEGGEYT) is an ATP binding site. 3 residues coordinate Mg(2+): aspartate 255, glutamate 268, and asparagine 270.

This sequence belongs to the D-alanine--D-alanine ligase family. Mg(2+) is required as a cofactor. Requires Mn(2+) as cofactor.

The protein localises to the cytoplasm. It catalyses the reaction 2 D-alanine + ATP = D-alanyl-D-alanine + ADP + phosphate + H(+). Its pathway is cell wall biogenesis; peptidoglycan biosynthesis. Cell wall formation. This Alkalilimnicola ehrlichii (strain ATCC BAA-1101 / DSM 17681 / MLHE-1) protein is D-alanine--D-alanine ligase.